Here is a 570-residue protein sequence, read N- to C-terminus: Ferroportin (570 aa).

Topologically, residues 1–23 (MTKSRDQTHQEGCCGSLANYLTS) are cytoplasmic. Residues 24–53 (AKFLLYLGHSLSTWGDRMWHFAVSVFLVEL) form a helical membrane-spanning segment. Aspartate 39 and histidine 43 together coordinate Fe cation. Over 54-57 (YGNS) the chain is Extracellular. A helical transmembrane segment spans residues 58–84 (LLLTAVYGLVVAGSVLVLGAIIGDWVD). The Cytoplasmic segment spans residues 85 to 87 (KNA). The chain crosses the membrane as a helical span at residues 88-118 (RLKVAQTSLVVQNVSVILCGIILMMVFLHKN). At 119–126 (ELLNMYHG) the chain is on the extracellular side. The chain crosses the membrane as a helical span at residues 127–162 (WVLTVCYILIITIANIANLASTATAITIQRDWIVVV). The Cytoplasmic portion of the chain corresponds to 163–164 (AG). Residues 165-195 (ENRSRLADMNATIRRIDQLTNILAPMAVGQI) form a helical membrane-spanning segment. Residues 196–202 (MTFGSPV) are Extracellular-facing. Residues 203–229 (IGCGFISGWNLVSMCVEYFLLWKVYQK) form a helical membrane-spanning segment. At 230–306 (TPALAVKAAL…DGWVSYYNQP (77 aa)) the chain is on the cytoplasmic side. A helical transmembrane segment spans residues 307–333 (VFLAGMGLAFLYMTVLGFDCITTGYAY). Cysteine 326 is a Fe cation binding site. Topologically, residues 334–338 (TQGLS) are extracellular. A helical transmembrane segment spans residues 339 to 366 (GSILSVLMGASAITGIMGTVAFTWLRRK). Residues 367–368 (CG) lie on the Cytoplasmic side of the membrane. The helical transmembrane segment at 369–391 (LVRTGLFSGLAQLSCLILCVISV) threads the bilayer. Residues 392–452 (FMPGSPLDLS…EMSTKSVPII (61 aa)) lie on the Extracellular side of the membrane. Residues 453-482 (SVSLLFAGVIAARIGLWSFDLTVTQLLQEN) traverse the membrane as a helical segment. Residues 483–487 (VIESE) lie on the Cytoplasmic side of the membrane. Residues 488–512 (RGIINGVQNSMNYLLDLLHFIMVIL) traverse the membrane as a helical segment. Histidine 506 provides a ligand contact to Fe cation. Residues 513–515 (APN) are Extracellular-facing. Residues 516–541 (PEAFGLLVLISVSFVAMGHLMYFRFA) form a helical membrane-spanning segment. Residues 542–570 (QKTLGNQIFVCAPDEKEVTDESQPNTSVV) lie on the Cytoplasmic side of the membrane.

Belongs to the ferroportin (FP) (TC 2.A.100) family. SLC40A subfamily. In terms of assembly, identified in a complex with STOM. Interacts with HAMP; affinity of the peptide hormone HAMP for SLC40A1 increases by 80-fold in the presence of iron and the interaction promotes SLC40A1 ubiquitination and degradation. Part of a complex composed of SLC40A1/ferroportin, TF/transferrin and HEPH/hephaestin that transfers iron from cells to transferrin. In terms of processing, polyubiquitinated by RNF217; leading to proteasomal degradation. Under conditions of high systemic iron levels, both the hormone peptide hepcidin/HAMP and holo(iron bound)-transferrin/TF induce the ubiquitination, internalization and proteasomal degradation of SLC40A1 to control iron release from cells.

It localises to the cell membrane. It is found in the basolateral cell membrane. It carries out the reaction Fe(2+)(in) = Fe(2+)(out). During elevated serum iron levels, liver-derived hepcidin/HAMP negatively regulates cell surface SLC40A1 by inducing its ubiquitination, internalization, and degradation. Indeed, hepcidin/HAMP affinity towards ferroportin/SLC40A1 increases by 80-fold in the presence of iron. Transports Fe(2+) from the inside of a cell to the outside of the cell, playing a key role for maintaining systemic iron homeostasis. Transports iron from intestinal, splenic, hepatic cells, macrophages and erythrocytes into the blood to provide iron to other tissues. Controls therefore dietary iron uptake, iron recycling by macrophages and erythrocytes, and release of iron stores in hepatocytes. When iron is in excess in serum, circulating HAMP/hepcidin levels increase resulting in a degradation of SLC40A1, thus limiting the iron efflux to plasma. This Rattus norvegicus (Rat) protein is Ferroportin.